We begin with the raw amino-acid sequence, 372 residues long: NAD(P)H-quinone oxidoreductase subunit 1 (372 aa).

The next 8 helical transmembrane spans lie at 27-47 (IIWL…GVLV), 97-117 (ILFT…WLIV), 128-148 (VGIG…GLLM), 176-196 (LALS…IDIV), 204-224 (ILSW…ICAL), 266-286 (ILSA…PVPV), 308-328 (SIGI…AILL), and 347-367 (FLLP…LAFP).

Belongs to the complex I subunit 1 family. In terms of assembly, NDH-1 is composed of at least 11 different subunits.

Its subcellular location is the cellular thylakoid membrane. It carries out the reaction a plastoquinone + NADH + (n+1) H(+)(in) = a plastoquinol + NAD(+) + n H(+)(out). The catalysed reaction is a plastoquinone + NADPH + (n+1) H(+)(in) = a plastoquinol + NADP(+) + n H(+)(out). Functionally, NDH-1 shuttles electrons from an unknown electron donor, via FMN and iron-sulfur (Fe-S) centers, to quinones in the respiratory and/or the photosynthetic chain. The immediate electron acceptor for the enzyme in this species is believed to be plastoquinone. Couples the redox reaction to proton translocation, and thus conserves the redox energy in a proton gradient. This chain is NAD(P)H-quinone oxidoreductase subunit 1, found in Prochlorococcus marinus (strain AS9601).